Reading from the N-terminus, the 275-residue chain is Formamidopyrimidine-DNA glycosylase (275 aa).

Proline 2 acts as the Schiff-base intermediate with DNA in catalysis. The Proton donor role is filled by glutamate 3. The active-site Proton donor; for beta-elimination activity is the lysine 58. Positions 93, 111, and 156 each coordinate DNA. Residues 241–275 (FAYDRAGLPCRVCGTPIRQIVQGQRSTYFCPTCQR) form an FPG-type zinc finger. Arginine 265 functions as the Proton donor; for delta-elimination activity in the catalytic mechanism.

Belongs to the FPG family. As to quaternary structure, monomer. Zn(2+) is required as a cofactor.

It catalyses the reaction Hydrolysis of DNA containing ring-opened 7-methylguanine residues, releasing 2,6-diamino-4-hydroxy-5-(N-methyl)formamidopyrimidine.. The enzyme catalyses 2'-deoxyribonucleotide-(2'-deoxyribose 5'-phosphate)-2'-deoxyribonucleotide-DNA = a 3'-end 2'-deoxyribonucleotide-(2,3-dehydro-2,3-deoxyribose 5'-phosphate)-DNA + a 5'-end 5'-phospho-2'-deoxyribonucleoside-DNA + H(+). In terms of biological role, involved in base excision repair of DNA damaged by oxidation or by mutagenic agents. Acts as a DNA glycosylase that recognizes and removes damaged bases. Has a preference for oxidized purines, such as 7,8-dihydro-8-oxoguanine (8-oxoG). Has AP (apurinic/apyrimidinic) lyase activity and introduces nicks in the DNA strand. Cleaves the DNA backbone by beta-delta elimination to generate a single-strand break at the site of the removed base with both 3'- and 5'-phosphates. The polypeptide is Formamidopyrimidine-DNA glycosylase (Burkholderia vietnamiensis (strain G4 / LMG 22486) (Burkholderia cepacia (strain R1808))).